The following is a 358-amino-acid chain: Heat-inducible transcription repressor HrcA (358 aa).

The protein belongs to the HrcA family.

Negative regulator of class I heat shock genes (grpE-dnaK-dnaJ and groELS operons). Prevents heat-shock induction of these operons. The chain is Heat-inducible transcription repressor HrcA from Caulobacter vibrioides (strain NA1000 / CB15N) (Caulobacter crescentus).